Consider the following 482-residue polypeptide: UDP-N-acetylmuramate--L-alanine ligase (482 aa).

129 to 135 (GTHGKTT) contacts ATP.

Belongs to the MurCDEF family.

The protein resides in the cytoplasm. The enzyme catalyses UDP-N-acetyl-alpha-D-muramate + L-alanine + ATP = UDP-N-acetyl-alpha-D-muramoyl-L-alanine + ADP + phosphate + H(+). Its pathway is cell wall biogenesis; peptidoglycan biosynthesis. Functionally, cell wall formation. This is UDP-N-acetylmuramate--L-alanine ligase from Acinetobacter baumannii (strain SDF).